A 231-amino-acid polypeptide reads, in one-letter code: Phosphatidylserine decarboxylase proenzyme (231 aa).

Serine 188 acts as the Schiff-base intermediate with substrate; via pyruvic acid in catalysis. Residue serine 188 is modified to Pyruvic acid (Ser); by autocatalysis.

This sequence belongs to the phosphatidylserine decarboxylase family. PSD-A subfamily. In terms of assembly, heterodimer of a large membrane-associated beta subunit and a small pyruvoyl-containing alpha subunit. The cofactor is pyruvate. In terms of processing, is synthesized initially as an inactive proenzyme. Formation of the active enzyme involves a self-maturation process in which the active site pyruvoyl group is generated from an internal serine residue via an autocatalytic post-translational modification. Two non-identical subunits are generated from the proenzyme in this reaction, and the pyruvate is formed at the N-terminus of the alpha chain, which is derived from the carboxyl end of the proenzyme. The post-translation cleavage follows an unusual pathway, termed non-hydrolytic serinolysis, in which the side chain hydroxyl group of the serine supplies its oxygen atom to form the C-terminus of the beta chain, while the remainder of the serine residue undergoes an oxidative deamination to produce ammonia and the pyruvoyl prosthetic group on the alpha chain.

The protein resides in the cell membrane. It carries out the reaction a 1,2-diacyl-sn-glycero-3-phospho-L-serine + H(+) = a 1,2-diacyl-sn-glycero-3-phosphoethanolamine + CO2. Its pathway is phospholipid metabolism; phosphatidylethanolamine biosynthesis; phosphatidylethanolamine from CDP-diacylglycerol: step 2/2. Catalyzes the formation of phosphatidylethanolamine (PtdEtn) from phosphatidylserine (PtdSer). The protein is Phosphatidylserine decarboxylase proenzyme of Rickettsia prowazekii (strain Madrid E).